Consider the following 86-residue polypeptide: Dynein light chain 1, cytoplasmic (86 aa).

Belongs to the dynein light chain family. Homodimer. Cytoplasmic dynein consists of two catalytic heavy chains (HCs) and a number of non-catalytic subunits which present intermediate chains (ICs), light intermediate chains (LICs) and light chains (LCs). Component of the nuclear pore complex (NPC). NPC constitutes the exclusive means of nucleocytoplasmic transport. NPCs allow the passive diffusion of ions and small molecules and the active, nuclear transport receptor-mediated bidirectional transport of macromolecules such as proteins, RNAs, ribonucleoparticles (RNPs), and ribosomal subunits across the nuclear envelope. Due to its 8-fold rotational symmetry, all subunits are present with 8 copies or multiples thereof.

It is found in the cytoplasm. The protein resides in the cytoskeleton. The protein localises to the nucleus. It localises to the nuclear pore complex. In terms of biological role, acts as one of several non-catalytic accessory components of the cytoplasmic dynein complex that are thought to be involved in linking dynein to cargos and to adapter proteins that regulate dynein function. Cytoplasmic dynein 1 acts as a motor for the intracellular retrograde motility of vesicles and organelles along microtubules. May play a role in changing or maintaining the spatial distribution of cytoskeletal structures. Also a component of the nuclear pore complex. In Candida glabrata (strain ATCC 2001 / BCRC 20586 / JCM 3761 / NBRC 0622 / NRRL Y-65 / CBS 138) (Yeast), this protein is Dynein light chain 1, cytoplasmic (DYN2).